The following is a 225-amino-acid chain: Cytidylate kinase (225 aa).

11–19 contributes to the ATP binding site; the sequence is GPAAAGKST.

The protein belongs to the cytidylate kinase family. Type 1 subfamily.

It is found in the cytoplasm. The catalysed reaction is CMP + ATP = CDP + ADP. It carries out the reaction dCMP + ATP = dCDP + ADP. This Bacillus cereus (strain B4264) protein is Cytidylate kinase.